The primary structure comprises 610 residues: Protein SAN1 (610 aa).

Residues 1-10 are compositionally biased toward polar residues; the sequence is MSESGQEQNR. 2 disordered regions span residues 1 to 36 and 176 to 231; these read MSES…NGGA and VDST…PSIP. Residues 11–36 show a composition bias toward low complexity; that stretch reads GTNTSPNNAENNNNSNAASGPLNGGA. Positions 194–203 are enriched in basic and acidic residues; that stretch reads EGTKKRKDNE. Residues 210–223 are compositionally biased toward polar residues; that stretch reads TADNDSNPSITNAT. An RING-type zinc finger spans residues 240-280; sequence NDEETNPSYKHSPIKLPCGHIFGRECIYKWSRLENSCPLCR. Disordered regions lie at residues 318 to 348, 360 to 453, 471 to 502, 514 to 554, and 569 to 610; these read TAVN…ASSG, VPQN…TDPH, GTSD…TTQG, GHFT…GVAS, and NNNS…RSSQ. Polar residues predominate over residues 319–348; the sequence is AVNSTNENSSAPSENTSNTTVPTIGNASSG. 2 stretches are compositionally biased toward low complexity: residues 384 to 406 and 425 to 447; these read NGPS…NQSP and PSAS…NTSS. A compositionally biased stretch (polar residues) spans 471–492; that stretch reads GTSDTSATTAPGAQTVHNQGRN. Low complexity predominate over residues 493 to 502; the sequence is DSSSSDTTQG. 2 stretches are compositionally biased toward polar residues: residues 533–554 and 592–610; these read QQRG…GVAS and DTTI…RSSQ.

Functionally, plays a specific role in mating-type regulation of yeast, by acting post-translationally to control the stability or activity of the SIR4 proteins. The protein is Protein SAN1 (SAN1) of Saccharomyces cerevisiae (strain ATCC 204508 / S288c) (Baker's yeast).